A 391-amino-acid chain; its full sequence is Isochorismate synthase EntC (391 aa).

Thr-140, Thr-142, Val-145, and Asp-146 together coordinate Mg(2+). The active-site Proton acceptor is Lys-147. Glu-197 acts as the Proton donor in catalysis. Isochorismate-binding residues include Gly-214, Ser-215, Glu-241, Ala-303, Arg-347, and Gly-361. Mg(2+) is bound at residue Glu-241. Glu-376 lines the Mg(2+) pocket. Lys-380 lines the isochorismate pocket.

The protein belongs to the isochorismate synthase family. Monomer. Forms a specific pairwise interaction with EntB; this interaction likely facilitates substrate channeling to connect the EntB and EntC active sites. Requires Mg(2+) as cofactor.

The enzyme catalyses chorismate = isochorismate. It functions in the pathway siderophore biosynthesis; enterobactin biosynthesis. Functionally, involved in the biosynthesis of the siderophore enterobactin (macrocyclic trimeric lactone of N-(2,3-dihydroxybenzoyl)-serine). Catalyzes the reversible conversion of chorismate to isochorismate. The chain is Isochorismate synthase EntC from Escherichia coli O157:H7.